Consider the following 463-residue polypeptide: Phosphomannomutase/phosphoglucomutase (463 aa).

Serine 108 (phosphoserine intermediate) is an active-site residue. The Mg(2+) site is built by serine 108, aspartate 242, aspartate 244, and aspartate 246. Substrate contacts are provided by glutamate 325, serine 327, and histidine 329.

The protein belongs to the phosphohexose mutase family. In terms of assembly, monomer. It depends on Mg(2+) as a cofactor.

It catalyses the reaction alpha-D-mannose 1-phosphate = D-mannose 6-phosphate. The enzyme catalyses alpha-D-glucose 1-phosphate = alpha-D-glucose 6-phosphate. It participates in nucleotide-sugar biosynthesis; GDP-alpha-D-mannose biosynthesis; alpha-D-mannose 1-phosphate from D-fructose 6-phosphate: step 2/2. It functions in the pathway bacterial outer membrane biogenesis; lipopolysaccharide biosynthesis. The phosphomannomutase activity produces a precursor for alginate polymerization. The alginate layer causes a mucoid phenotype and provides a protective barrier against host immune defenses and antibiotics. Also involved in core-LPS biosynthesis due to its phosphoglucomutase activity. Essential for biofilm production. The sequence is that of Phosphomannomutase/phosphoglucomutase (algC) from Pseudomonas putida (strain ATCC 47054 / DSM 6125 / CFBP 8728 / NCIMB 11950 / KT2440).